Here is a 191-residue protein sequence, read N- to C-terminus: UPF0312 protein SO_3370 (191 aa).

Residues 1–22 (MKKQLFSALIGASLFAPMAVSA) form the signal peptide.

It belongs to the UPF0312 family. Type 1 subfamily.

It is found in the periplasm. The chain is UPF0312 protein SO_3370 from Shewanella oneidensis (strain ATCC 700550 / JCM 31522 / CIP 106686 / LMG 19005 / NCIMB 14063 / MR-1).